Consider the following 238-residue polypeptide: Probable transcriptional regulatory protein VS_II1504 (238 aa).

Belongs to the TACO1 family.

Its subcellular location is the cytoplasm. The sequence is that of Probable transcriptional regulatory protein VS_II1504 from Vibrio atlanticus (strain LGP32) (Vibrio splendidus (strain Mel32)).